Consider the following 482-residue polypeptide: Auxin transporter-like protein 4 (482 aa).

Residues 1 to 59 lie on the Cytoplasmic side of the membrane; it reads MLSQNQAEEAIVTNMNETEQEGGSSLEEIAEDQSMFNFKSFLWHGGSVWDAWFSCASNQ. Residues 60 to 77 traverse the membrane as a helical segment; sequence VAQVLLTLPYSFSQLGMV. The Extracellular segment spans residues 78–79; that stretch reads SG. Residues 80-100 form a helical membrane-spanning segment; it reads IVFQIFYGLIGSWTAYLISVL. The Cytoplasmic segment spans residues 101–135; it reads YVEYRARKEKENVNFKNHVIQWFEVLDGLLGRYWK. A helical transmembrane segment spans residues 136-156; sequence ALGLAFNCTFLLFGSVIQLIA. Residues 157–172 lie on the Extracellular side of the membrane; sequence CASNIYYINDKLDKRT. A helical membrane pass occupies residues 173–193; that stretch reads WTYIFGACCATTVFIPSFHNY. The Cytoplasmic portion of the chain corresponds to 194 to 196; it reads RIW. The chain crosses the membrane as a helical span at residues 197 to 217; the sequence is SFLGLGMTTYTAWYMAIAAIV. The Extracellular segment spans residues 218–232; it reads NGQIENVVHSGPTKL. The helical transmembrane segment at 233–253 threads the bilayer; that stretch reads VLYFTGATNILYTFGGHAVTV. Residues 254 to 266 lie on the Cytoplasmic side of the membrane; that stretch reads EIMHAMWKPQKFK. A helical membrane pass occupies residues 267–287; sequence YIYFLATLYVFTLTIPSAVAV. At 288–314 the chain is on the extracellular side; it reads YWAFGDELLNHSNAFSLLPKNGFRDAA. An N-linked (GlcNAc...) asparagine glycan is attached at Asn-297. Residues 315-335 form a helical membrane-spanning segment; it reads VILMLIHQFITFGFACTPLYF. Over 336–356 the chain is Cytoplasmic; the sequence is VWEKVIGMHDTKSICLRALVR. A helical membrane pass occupies residues 357–377; that stretch reads LPVVIPIWFLAIIFPFFGPIN. Residue Ser-378 is a topological domain, extracellular. Residues 379–399 traverse the membrane as a helical segment; it reads AVGALLVTFTVYIIPALAHML. Topologically, residues 400-422 are cytoplasmic; the sequence is TYRTASARKNAVEKPPSFLPSWT. The chain crosses the membrane as a helical span at residues 423 to 443; sequence AVYVLNAFIVVWVLVVGFGFG. The Extracellular portion of the chain corresponds to 444–482; that stretch reads GWASMTNFIRQIDTFGLFAKCYQCKPPTPPQAPSPHARH.

The protein belongs to the amino acid/polyamine transporter 2 family. Amino acid/auxin permease (AAAP) (TC 2.A.18.1) subfamily. In terms of tissue distribution, shoots and roots of nodulating plants, at low levels.

The protein resides in the cell membrane. Its function is as follows. Carrier protein involved in proton-driven auxin influx. Mediates the formation of auxin gradient from developing leaves (site of auxin biosynthesis) to tips by contributing to the loading of auxin in vascular tissues and facilitating acropetal (base to tip) auxin transport within inner tissues of the root apex, and basipetal (tip to base) auxin transport within outer tissues of the root apex. May be involved in lateral roots and nodules formation. The polypeptide is Auxin transporter-like protein 4 (LAX4) (Medicago truncatula (Barrel medic)).